Reading from the N-terminus, the 461-residue chain is Dihydrolipoyl dehydrogenase (461 aa).

FAD contacts are provided by residues 33–41 (EAAEVGGVC), K50, and A112. An intrachain disulfide couples C41 to C46. Residues 173–177 (GGGAV), E196, and 263–266 (AVGR) each bind NAD(+). Residues D306 and A314 each coordinate FAD. The active-site Proton acceptor is H437.

The protein belongs to the class-I pyridine nucleotide-disulfide oxidoreductase family. As to quaternary structure, homodimer. Requires FAD as cofactor.

The protein resides in the membrane. It carries out the reaction N(6)-[(R)-dihydrolipoyl]-L-lysyl-[protein] + NAD(+) = N(6)-[(R)-lipoyl]-L-lysyl-[protein] + NADH + H(+). In terms of biological role, has chromate reductase activity. This chain is Dihydrolipoyl dehydrogenase, found in Thermus scotoductus (strain ATCC 700910 / SA-01).